The following is a 633-amino-acid chain: Threonine--tRNA ligase (633 aa).

The editing domain stretch occupies residues Met-1–Lys-143. Catalytic regions lie at residues Asn-220–Pro-515 and Pro-221–Pro-515. Zn(2+)-binding residues include Cys-314, His-365, and His-488.

It belongs to the class-II aminoacyl-tRNA synthetase family. In terms of assembly, homodimer. It depends on Zn(2+) as a cofactor.

The protein localises to the cytoplasm. The catalysed reaction is tRNA(Thr) + L-threonine + ATP = L-threonyl-tRNA(Thr) + AMP + diphosphate + H(+). In terms of biological role, catalyzes the attachment of threonine to tRNA(Thr) in a two-step reaction: L-threonine is first activated by ATP to form Thr-AMP and then transferred to the acceptor end of tRNA(Thr). Also edits incorrectly charged L-seryl-tRNA(Thr). In Nanoarchaeum equitans (strain Kin4-M), this protein is Threonine--tRNA ligase.